Consider the following 137-residue polypeptide: Ribosome-binding factor A (137 aa).

This sequence belongs to the RbfA family. Monomer. Binds 30S ribosomal subunits, but not 50S ribosomal subunits or 70S ribosomes.

It is found in the cytoplasm. In terms of biological role, one of several proteins that assist in the late maturation steps of the functional core of the 30S ribosomal subunit. Associates with free 30S ribosomal subunits (but not with 30S subunits that are part of 70S ribosomes or polysomes). Required for efficient processing of 16S rRNA. May interact with the 5'-terminal helix region of 16S rRNA. The protein is Ribosome-binding factor A of Shewanella amazonensis (strain ATCC BAA-1098 / SB2B).